A 185-amino-acid polypeptide reads, in one-letter code: MEGSSSSMQSKYKGVRKRKWGKWVSEIRLPNSRERIWLGSYDTPEKAARAFDAALYCLRGNNAKFNFPDNPPVISGGRNLSRSEIREAAARFANSAEDDSSGGAGYEIRQESASTSMDVDSEFLSMLPTVGSGNFASEFGLFPGFDDFSDEYSGDRFREQLSPTQDYYQLGEETYADGSMFLWNF.

Residues 11–68 (KYKGVRKRKWGKWVSEIRLPNSRERIWLGSYDTPEKAARAFDAALYCLRGNNAKFNFP) constitute a DNA-binding region (AP2/ERF).

The protein belongs to the AP2/ERF transcription factor family. ERF subfamily.

It is found in the nucleus. Probably acts as a transcriptional activator. Binds to the GCC-box pathogenesis-related promoter element. May be involved in the regulation of gene expression by stress factors and by components of stress signal transduction pathways. This is Ethylene-responsive transcription factor ERF017 (ERF017) from Arabidopsis thaliana (Mouse-ear cress).